Here is a 155-residue protein sequence, read N- to C-terminus: Peptide methionine sulfoxide reductase MsrB (155 aa).

The region spanning 15–137 is the MsrB domain; it reads REALIATLNA…NSVSLTFIPT (123 aa). Zn(2+)-binding residues include cysteine 54, cysteine 57, cysteine 103, and cysteine 106. Residue cysteine 126 is the Nucleophile of the active site.

This sequence belongs to the MsrB Met sulfoxide reductase family. It depends on Zn(2+) as a cofactor.

The enzyme catalyses L-methionyl-[protein] + [thioredoxin]-disulfide + H2O = L-methionyl-(R)-S-oxide-[protein] + [thioredoxin]-dithiol. The sequence is that of Peptide methionine sulfoxide reductase MsrB from Xylella fastidiosa (strain M23).